The sequence spans 1657 residues: Ras GTPase-activating-like protein IQGAP1 (1657 aa).

N-acetylserine is present on S2. At S2 the chain carries Phosphoserine. The Calponin-homology (CH) domain occupies 44–159 (LCHLEEAKRW…YCIHALSLYL (116 aa)). Y172 carries the phosphotyrosine modification. S330 is subject to Phosphoserine. A WW domain is found at 685–710 (WVKHWVKGGYHYYHNLETQAGGWAEP). IQ domains are found at residues 745-774 (NEGLITKLQACCRGYLVRQEFRSRMNFLKK), 775-804 (QIPAITCIQSQWRGYKQKKAYQDRLAYLHS), 805-834 (HKDEVVKIQSLARMHQARKRYRDRLQYFRD), and 835-864 (HINDIIKIQAFIRANKARDDYKTLINAEDP). Residues 956–1274 (GGLKALSKEK…FFQVACDVPE (319 aa)) are C1. The 250-residue stretch at 1020–1269 (YLLLRLFQTA…QKFRRFFQVA (250 aa)) folds into the Ras-GAP domain. The interval 1276 to 1657 (QDKFNVDEYS…FLLNKKFYGK (382 aa)) is C2. The residue at position 1441 (S1441) is a Phosphoserine.

As to quaternary structure, interacts with CDC42; the interaction is demonstrated with IQGAP1 in GTP-bound and in nucleotide-free state. Interacts with RAC1. Does not interact with RHOA. Interacts with TSG101. Interacts with PAK6. Interacts with SASH1. Interacts with PJVK. Interacts with SLC26A4. This interaction enhances the chloride-bicarbonate exchange activity of SLC26A4. Interacts with SVEP1. Interacts with ILK; the interaction is required for localization of IQGAP to the cell cortex. In terms of assembly, (Microbial infection) In case of infection, interacts with S.typhimurium protein sseI. Expressed in the kidney (at protein level).

The protein localises to the cell membrane. It is found in the nucleus. The protein resides in the cytoplasm. Its subcellular location is the cell cortex. It localises to the apical cell membrane. The protein localises to the basolateral cell membrane. In terms of biological role, plays a crucial role in regulating the dynamics and assembly of the actin cytoskeleton. Recruited to the cell cortex by interaction with ILK which allows it to cooperate with its effector DIAPH1 to locally stabilize microtubules and allow stable insertion of caveolae into the plasma membrane. Binds to activated CDC42 but does not stimulate its GTPase activity. Associates with calmodulin. May promote neurite outgrowth. May play a possible role in cell cycle regulation by contributing to cell cycle progression after DNA replication arrest. In Mus musculus (Mouse), this protein is Ras GTPase-activating-like protein IQGAP1 (Iqgap1).